Here is an 83-residue protein sequence, read N- to C-terminus: UPF0297 protein LEUM_0557 (83 aa).

It belongs to the UPF0297 family.

In Leuconostoc mesenteroides subsp. mesenteroides (strain ATCC 8293 / DSM 20343 / BCRC 11652 / CCM 1803 / JCM 6124 / NCDO 523 / NBRC 100496 / NCIMB 8023 / NCTC 12954 / NRRL B-1118 / 37Y), this protein is UPF0297 protein LEUM_0557.